The sequence spans 805 residues: Leucine--tRNA ligase (805 aa).

Residues 41-52 carry the 'HIGH' region motif; sequence PYPSGAGLHVGH. A 'KMSKS' region motif is present at residues 577-581; that stretch reads KMSKS. ATP is bound at residue Lys-580.

This sequence belongs to the class-I aminoacyl-tRNA synthetase family.

The protein resides in the cytoplasm. The catalysed reaction is tRNA(Leu) + L-leucine + ATP = L-leucyl-tRNA(Leu) + AMP + diphosphate. This Staphylococcus aureus (strain USA300) protein is Leucine--tRNA ligase.